Here is a 288-residue protein sequence, read N- to C-terminus: Protease HtpX homolog (288 aa).

2 helical membrane-spanning segments follow: residues 6-26 and 28-48; these read TAFLMVALMLVFIAVGGYVGG and QGMMIAFLMAAGMNIFSYFFS. H130 contributes to the Zn(2+) binding site. The active site involves E131. H134 serves as a coordination point for Zn(2+). The next 2 helical transmembrane spans lie at 140–160 and 179–199; these read ILTGSVAAILAGAIAMVANFA and VIMLIIAVVMPLAATVIQMAI. Residue E204 coordinates Zn(2+).

The protein belongs to the peptidase M48B family. Requires Zn(2+) as cofactor.

The protein localises to the cell inner membrane. The sequence is that of Protease HtpX homolog from Campylobacter concisus (strain 13826).